A 160-amino-acid chain; its full sequence is Periplasmic nitrate reductase, electron transfer subunit (160 aa).

An N-terminal signal peptide occupies residues 1-25 (MKTRIIFAALALAAAMPLLVSGVFA). 8 residues coordinate heme c: His73, Cys87, Cys90, His91, His108, Cys127, Cys130, and His131.

It belongs to the NapB family. In terms of assembly, component of the periplasmic nitrate reductase NapAB complex composed of NapA and NapB. In terms of processing, binds 2 heme C groups per subunit.

The protein localises to the periplasm. In terms of biological role, electron transfer subunit of the periplasmic nitrate reductase complex NapAB. Receives electrons from the membrane-anchored tetraheme c-type NapC protein and transfers these to NapA subunit, thus allowing electron flow between membrane and periplasm. Essential for periplasmic nitrate reduction with nitrate as the terminal electron acceptor. In Azospirillum brasilense, this protein is Periplasmic nitrate reductase, electron transfer subunit.